We begin with the raw amino-acid sequence, 181 residues long: c-Myc-binding protein homolog (181 aa).

Over residues 111–127 (ESTEAAEQQQQQQQQEN) the composition is skewed to low complexity. Disordered regions lie at residues 111–145 (ESTE…VAEI) and 159–181 (VVTT…GSSE). A compositionally biased stretch (polar residues) spans 168-181 (PSPTVQAEASGSSE).

Belongs to the AMY1 family.

The protein resides in the nucleus. This Drosophila melanogaster (Fruit fly) protein is c-Myc-binding protein homolog.